A 1081-amino-acid polypeptide reads, in one-letter code: Teashirt homolog 3 (1081 aa).

Disordered stretches follow at residues 25–104 (LVED…EVQV), 141–161 (PSSENNGGSSSSSSSSSSSCG), and 238–257 (HYRDDNHETDNNNPKRWSKP). The span at 26–37 (VEDDVEPEEQAA) shows a compositional bias: acidic residues. The span at 68–87 (SSHEMDSESHISETSDRMAD) shows a compositional bias: basic and acidic residues. C2H2-type zinc fingers lie at residues 214 to 238 (FRCKDCSAAYDTLVELTVHMNETGH) and 275 to 299 (LKCMYCGHSFESLQDLSVHMIKTKH). Residues 238–247 (HYRDDNHETD) show a composition bias toward basic and acidic residues. The disordered stretch occupies residues 325–346 (SLELELPSSPDSTGGTPKATLS). A C2H2-type 3; atypical zinc finger spans residues 387-410 (KCMECGSSHDTLQELTAHMMVTGH). Over residues 474–491 (VDKEKAVPDEKPKEREKP) the composition is skewed to basic and acidic residues. 4 disordered regions span residues 474–499 (VDKEKAVPDEKPKEREKPSEEEEKYD), 626–699 (EKMK…KPLS), 792–824 (LTKGKSDKGCSLGSGLLSPTSTSPATSSSTVTT), and 855–897 (TESH…RQSN). Residues 606-630 (NFHAMEELVKKVTEKVAKVEEKMKE) adopt a coiled-coil conformation. Polar residues predominate over residues 660–670 (SDGSFKSQENS). Ser-682 is modified (phosphoserine). 2 stretches are compositionally biased toward low complexity: residues 800-824 (GCSLGSGLLSPTSTSPATSSSTVTT) and 856-869 (ESHTSKSSTPSSIS). The segment at residues 891–961 (RKGRQSNWNP…NVKYQLRRTG (71 aa)) is a DNA-binding region (homeobox; atypical). C2H2-type zinc fingers lie at residues 976–998 (FFCNDCASQIRTPSTYISHLESH) and 1041–1064 (YQCKLCNRTFASKHAVKLHLSKTH).

Belongs to the teashirt C2H2-type zinc-finger protein family. Interacts (via N-terminus) with HDAC1 and HDAC2; the interaction is direct. Found in a trimeric complex with APBB1 and HDAC1; the interaction between HDAC1 and APBB1 is mediated by TSHZ3. Interacts (via homeobox domain) with APBB1 (via PID domain 1). In terms of tissue distribution, expressed in corticostriatal neurons.

The protein resides in the nucleus. The protein localises to the cell projection. It is found in the growth cone. Transcriptional regulator involved in developmental processes. Functions in association with APBB1, SET and HDAC factors as a transcriptional repressor, that inhibits the expression of CASP4. TSHZ3-mediated transcription repression involves the recruitment of histone deacetylases HDAC1 and HDAC2. Associates with chromatin in a region surrounding the CASP4 transcriptional start site(s). Regulates the development of neurons involved in both respiratory rhythm and airflow control. Promotes maintenance of nucleus ambiguus (nA) motoneurons, which govern upper airway function, and establishes a respiratory rhythm generator (RRG) activity compatible with survival at birth. Involved in the differentiation of the proximal uretic smooth muscle cells during developmental processes. Involved in the up-regulation of myocardin, that directs the expression of smooth muscle cells in the proximal ureter. Involved in the modulation of glutamatergic synaptic transmission and long-term synaptic potentiation. The sequence is that of Teashirt homolog 3 (Tshz3) from Mus musculus (Mouse).